The sequence spans 724 residues: Outer spore wall protein 2 (724 aa).

Disordered regions lie at residues 407–427 and 477–497; these read NSGQ…KNRV and TSGG…YDDK.

The protein localises to the cytoplasm. It is found in the prospore membrane. May be involved in a late step of spore wall assembly. This chain is Outer spore wall protein 2 (OSW2), found in Saccharomyces cerevisiae (strain ATCC 204508 / S288c) (Baker's yeast).